We begin with the raw amino-acid sequence, 434 residues long: Trigger factor (434 aa).

A PPIase FKBP-type domain is found at 161 to 246 (EDRVTIDFTG…LKKVEERELP (86 aa)).

The protein belongs to the FKBP-type PPIase family. Tig subfamily.

It is found in the cytoplasm. The enzyme catalyses [protein]-peptidylproline (omega=180) = [protein]-peptidylproline (omega=0). Functionally, involved in protein export. Acts as a chaperone by maintaining the newly synthesized protein in an open conformation. Functions as a peptidyl-prolyl cis-trans isomerase. The chain is Trigger factor from Pectobacterium carotovorum subsp. carotovorum (strain PC1).